A 247-amino-acid chain; its full sequence is Probable transcriptional regulatory protein PC1_1817 (247 aa).

This sequence belongs to the TACO1 family.

The protein resides in the cytoplasm. The polypeptide is Probable transcriptional regulatory protein PC1_1817 (Pectobacterium carotovorum subsp. carotovorum (strain PC1)).